Consider the following 667-residue polypeptide: Leucine aminopeptidase 2 (667 aa).

A peptide-binding positions include 188–190 (QCQ) and 318–323 (PYGGME). His-347 provides a ligand contact to Zn(2+). Catalysis depends on Glu-348, which acts as the Proton acceptor. Zn(2+)-binding residues include His-351 and Glu-370. The active-site Proton donor is the Tyr-436.

This sequence belongs to the peptidase M1 family. It depends on Zn(2+) as a cofactor.

Its subcellular location is the cytoplasm. The protein resides in the nucleus. The catalysed reaction is an epoxide + H2O = an ethanediol. In terms of biological role, aminopeptidase that preferentially cleaves di- and tripeptides. Also has low epoxide hydrolase activity (in vitro). Can hydrolyze the epoxide leukotriene LTA(4) but it forms preferentially 5,6-dihydroxy-7,9,11,14-eicosatetraenoic acid rather than the cytokine leukotriene B(4) as the product compared to the homologous mammalian enzyme (in vitro). The sequence is that of Leucine aminopeptidase 2 (ara-1) from Neurospora crassa (strain ATCC 24698 / 74-OR23-1A / CBS 708.71 / DSM 1257 / FGSC 987).